The chain runs to 386 residues: ADP,ATP carrier protein, mitochondrial (386 aa).

The transit peptide at 1–76 (ADNQHPTVYQ…ANASPVFVQA (76 aa)) directs the protein to the mitochondrion. Solcar repeat units lie at residues 83–176 (AAFA…FKRL), 188–281 (KWFA…LKPV), and 289–375 (DSFF…LQVI). 5 helical membrane passes run 85 to 112 (FATDFLMGGVSAAVSKTAAAPIERVKLL), 153 to 177 (TANVIRYFPTQALNFAFKDYFKRLF), 186 to 206 (YWKWFAGNLASGGGAGASSLL), 257 to 278 (FNISCVGIIVYRGLYFGMYDSL), and 292 to 312 (FASFALGWLITNGAGLASYPI). Residues arginine 158 and lysine 170 each coordinate ADP. Arginine 316 is an ADP binding site. The tract at residues 316–321 (RRRMMM) is important for transport activity. Positions 316–321 (RRRMMM) match the Nucleotide carrier signature motif motif. Residues 352–372 (AGANVLRAVAGAGVLAGYDKL) form a helical membrane-spanning segment.

This sequence belongs to the mitochondrial carrier (TC 2.A.29) family. In terms of assembly, monomer.

The protein localises to the mitochondrion inner membrane. It catalyses the reaction ADP(in) + ATP(out) = ADP(out) + ATP(in). Its activity is regulated as follows. The matrix-open state (m-state) is inhibited by the membrane-permeable bongkrekic acid (BKA). The cytoplasmic-open state (c-state) is inhibited by the membrane-impermeable toxic inhibitor carboxyatractyloside (CATR). Its function is as follows. ADP:ATP antiporter that mediates import of ADP into the mitochondrial matrix for ATP synthesis, and export of ATP out to fuel the cell. Cycles between the cytoplasmic-open state (c-state) and the matrix-open state (m-state): operates by the alternating access mechanism with a single substrate-binding site intermittently exposed to either the cytosolic (c-state) or matrix (m-state) side of the inner mitochondrial membrane. The chain is ADP,ATP carrier protein, mitochondrial (ANT1) from Solanum tuberosum (Potato).